Reading from the N-terminus, the 426-residue chain is C4-dicarboxylate transport protein (426 aa).

8 helical membrane passes run 8–28 (VLYV…HFYP), 44–64 (LIKM…IAGM), 78–98 (LLYF…ATHL), 148–168 (GEIL…AHVG), 184–204 (ILFG…FGAM), 222–242 (LIGT…GFIA), 297–317 (GYSF…LFIA), and 355–375 (AATL…ILGI).

It belongs to the dicarboxylate/amino acid:cation symporter (DAACS) (TC 2.A.23) family.

It localises to the cell inner membrane. Responsible for the transport of dicarboxylates such as succinate, fumarate, and malate from the periplasm across the membrane. This chain is C4-dicarboxylate transport protein, found in Paraburkholderia phymatum (strain DSM 17167 / CIP 108236 / LMG 21445 / STM815) (Burkholderia phymatum).